We begin with the raw amino-acid sequence, 227 residues long: Phosphoribosylformylglycinamidine synthase subunit PurQ (227 aa).

Residues 3–225 (FAVIVLPGSN…VKNWRETHVA (223 aa)) form the Glutamine amidotransferase type-1 domain. The active-site Nucleophile is the Cys86. Residues His194 and Glu196 contribute to the active site.

As to quaternary structure, part of the FGAM synthase complex composed of 1 PurL, 1 PurQ and 2 PurS subunits.

It is found in the cytoplasm. It catalyses the reaction N(2)-formyl-N(1)-(5-phospho-beta-D-ribosyl)glycinamide + L-glutamine + ATP + H2O = 2-formamido-N(1)-(5-O-phospho-beta-D-ribosyl)acetamidine + L-glutamate + ADP + phosphate + H(+). It carries out the reaction L-glutamine + H2O = L-glutamate + NH4(+). The protein operates within purine metabolism; IMP biosynthesis via de novo pathway; 5-amino-1-(5-phospho-D-ribosyl)imidazole from N(2)-formyl-N(1)-(5-phospho-D-ribosyl)glycinamide: step 1/2. Functionally, part of the phosphoribosylformylglycinamidine synthase complex involved in the purines biosynthetic pathway. Catalyzes the ATP-dependent conversion of formylglycinamide ribonucleotide (FGAR) and glutamine to yield formylglycinamidine ribonucleotide (FGAM) and glutamate. The FGAM synthase complex is composed of three subunits. PurQ produces an ammonia molecule by converting glutamine to glutamate. PurL transfers the ammonia molecule to FGAR to form FGAM in an ATP-dependent manner. PurS interacts with PurQ and PurL and is thought to assist in the transfer of the ammonia molecule from PurQ to PurL. The polypeptide is Phosphoribosylformylglycinamidine synthase subunit PurQ (Bacillus licheniformis (strain ATCC 14580 / DSM 13 / JCM 2505 / CCUG 7422 / NBRC 12200 / NCIMB 9375 / NCTC 10341 / NRRL NRS-1264 / Gibson 46)).